Consider the following 191-residue polypeptide: HTH-type transcriptional regulator YjdC (191 aa).

One can recognise an HTH tetR-type domain in the interval Met-1–Ile-60.

The chain is HTH-type transcriptional regulator YjdC (yjdC) from Escherichia coli (strain K12).